Reading from the N-terminus, the 43-residue chain is Cytochrome b559 subunit beta (43 aa).

A helical membrane pass occupies residues 18–34; it reads WLSVHALGIPTIFFLGA. His22 is a binding site for heme.

Belongs to the PsbE/PsbF family. Heterodimer of an alpha subunit and a beta subunit. PSII is composed of 1 copy each of membrane proteins PsbA, PsbB, PsbC, PsbD, PsbE, PsbF, PsbH, PsbI, PsbJ, PsbK, PsbL, PsbM, PsbT, PsbX, PsbY, PsbZ, Psb30/Ycf12, at least 3 peripheral proteins of the oxygen-evolving complex and a large number of cofactors. It forms dimeric complexes. The cofactor is heme b.

It localises to the plastid. The protein localises to the chloroplast thylakoid membrane. Functionally, this b-type cytochrome is tightly associated with the reaction center of photosystem II (PSII). PSII is a light-driven water:plastoquinone oxidoreductase that uses light energy to abstract electrons from H(2)O, generating O(2) and a proton gradient subsequently used for ATP formation. It consists of a core antenna complex that captures photons, and an electron transfer chain that converts photonic excitation into a charge separation. This is Cytochrome b559 subunit beta from Stigeoclonium helveticum (Green alga).